The sequence spans 150 residues: Ventricular natriuretic peptide (150 aa).

Residues 1-21 (MAKSGIYLGCFILILIQNMVA) form the signal peptide. The interval 52–75 (EEPEVYPESEDMKMDAEEEDAGIS) is disordered. Cysteines 120 and 136 form a disulfide.

This sequence belongs to the natriuretic peptide family. In terms of tissue distribution, heart ventricle, and to a lower extent in heart atrium.

The protein resides in the secreted. Exhibits natriuretic and vasodepressor activity. The chain is Ventricular natriuretic peptide (vnp) from Anguilla japonica (Japanese eel).